Consider the following 254-residue polypeptide: 5'-nucleotidase SurE (254 aa).

4 residues coordinate a divalent metal cation: Asp8, Asp9, Ser39, and Asn97.

This sequence belongs to the SurE nucleotidase family. Requires a divalent metal cation as cofactor.

The protein localises to the cytoplasm. The catalysed reaction is a ribonucleoside 5'-phosphate + H2O = a ribonucleoside + phosphate. Its function is as follows. Nucleotidase that shows phosphatase activity on nucleoside 5'-monophosphates. This Alkaliphilus metalliredigens (strain QYMF) protein is 5'-nucleotidase SurE.